The chain runs to 362 residues: Histidinol-phosphate aminotransferase (362 aa).

Lys-220 carries the N6-(pyridoxal phosphate)lysine modification.

It belongs to the class-II pyridoxal-phosphate-dependent aminotransferase family. Histidinol-phosphate aminotransferase subfamily. As to quaternary structure, homodimer. Pyridoxal 5'-phosphate serves as cofactor.

It catalyses the reaction L-histidinol phosphate + 2-oxoglutarate = 3-(imidazol-4-yl)-2-oxopropyl phosphate + L-glutamate. It functions in the pathway amino-acid biosynthesis; L-histidine biosynthesis; L-histidine from 5-phospho-alpha-D-ribose 1-diphosphate: step 7/9. In Rhodospirillum centenum (strain ATCC 51521 / SW), this protein is Histidinol-phosphate aminotransferase.